The chain runs to 284 residues: Tropomyosin Pen a 1.0102 (284 aa).

The interval 1–51 (MDAIKKKMQAMKLEKDNAMDRADTLEQQNKEANNRAEKSEEEVHNLQKRMQ) is disordered. The stretch at 1–273 (MDAIKKKMQA…KEKYKSITDE (273 aa)) forms a coiled coil. A compositionally biased stretch (basic and acidic residues) spans 12–45 (KLEKDNAMDRADTLEQQNKEANNRAEKSEEEVHN). IgE-binding stretches follow at residues 43-57 (VHNL…ENDL), 85-105 (VAAL…SEER), 133-153 (RSLS…EARF), 187-202 (ESKI…VVGN), 247-284 (QKLQ…LSGY), 249-260 (LQKEVDRLEDEL), and 266-281 (KYKS…FSEL).

Belongs to the tropomyosin family. In terms of assembly, homodimer.

In terms of biological role, tropomyosin, in association with the troponin complex, plays a central role in the calcium dependent regulation of muscle contraction. The chain is Tropomyosin Pen a 1.0102 from Penaeus aztecus (Brown shrimp).